A 406-amino-acid polypeptide reads, in one-letter code: Cysteine desulfurase (406 aa).

Position 226 is an N6-(pyridoxal phosphate)lysine (K226). C364 (cysteine persulfide intermediate) is an active-site residue.

The protein belongs to the class-V pyridoxal-phosphate-dependent aminotransferase family. Csd subfamily. In terms of assembly, homodimer. Interacts with SufE and the SufBCD complex composed of SufB, SufC and SufD. The interaction with SufE is required to mediate the direct transfer of the sulfur atom from the S-sulfanylcysteine. Requires pyridoxal 5'-phosphate as cofactor.

The protein resides in the cytoplasm. It carries out the reaction (sulfur carrier)-H + L-cysteine = (sulfur carrier)-SH + L-alanine. The catalysed reaction is L-selenocysteine + AH2 = hydrogenselenide + L-alanine + A + H(+). It functions in the pathway cofactor biosynthesis; iron-sulfur cluster biosynthesis. Functionally, cysteine desulfurases mobilize the sulfur from L-cysteine to yield L-alanine, an essential step in sulfur metabolism for biosynthesis of a variety of sulfur-containing biomolecules. Component of the suf operon, which is activated and required under specific conditions such as oxidative stress and iron limitation. Acts as a potent selenocysteine lyase in vitro, that mobilizes selenium from L-selenocysteine. Selenocysteine lyase activity is however unsure in vivo. This is Cysteine desulfurase from Serratia proteamaculans (strain 568).